Here is a 1481-residue protein sequence, read N- to C-terminus: MAAPAQPKKIVAPTVSQINAEFVTQLACKYWAPHIKKKSPFDIKVIEEIYEKEIVKSRFAIRKIMLLEFSQYLENYLWMNYSPEVSSKAYLMSICCMVNEKFRENVPAWETFKKKPDHFPFFFKCILKAALAETDGEFSLHEQTLLLLFLDHCFNSLEVDLIRSQVQQLISLPMWMGLQPARLELELKKTPKLRKFWNLIKKNDEKMDPEAREQAYQERRFLSRLIQKFISVLKSIPLSEPVTMDKVHYCERFIELMIDLEALLPTRRWFNTILDDSHLLVHCYLSSLVHREEDGHLFSQLLDMLKFYTGFEINDQTGNALTENEMTTIHYDRITSLQRAAFAHFPELYDFALSNVAEVDARDSLVKFFGPLSSNTLHQVASYLCLLPTLPKNEDTTFDKEFLLELLVSRHERRISQIQQLNQMPLYPTEKIIWDENIVPTEYYSGEGCLALPKLNLQFLTLHDYLLRNFNLFRLESTYEIRQDIEDSVSRMKPWQSEYGGVVFGGWARMAQPIVAFTVVEVAKPNIGENWPTRVRADVTINLNVRDHIKDEWEGLRKHDVCFLITVRPTKPYGTKFDRRRPFIEQVGLVYVRGCEIQGMLDDKGRVIEDGPEPRPNLRGESRTFRVFLDPNQYQQDMTNTIQNGAEDVYDTFNVIMRRKPKENNFKAVLETIRNLMNTDCVVPDWLHDIILGYGDPSSAHYSKMPNQIATLDFNDTFLSIEHLKASFPGHNVKVTVSDPALQIPPFRITFPVRSGKGKKRKDADGEEDDTEEAKTLIVEPHVIPNRGPYPYNQPKRNTIQFTHTQIEAIRAGMQPGLTMVVGPPGTGKTDVAVQIISNIYHNFPEQRTLIVTHSNQALNQLFEKIMALDIDERHLLRLGHGEEELETEKDFSRYGRVNYVLARRIELLEEVKRLQKSLGVPGDASYTCETAGYFFLYQVMSRWEEYMSRVKNSGTACPDAAPDAAQVATFFPFHEYFANAPQPIFKGRSYEEDMEIAEGCFRHIKKIFTQLEEFRASELLRSGLDRSKYLLVKEAKIIAMTCTHAALKRHDLVKLGFKYDNILMEEAAQILEIETFIPLLLQNPQDGFSRLKRWIMIGDHHQLPPVIKNMAFQKYSNMEQSLFTRFVRVGVPTVDLDAQGRARASLCNLYNWRYKNLGNLPHVQLLPEFSTANAGLLYDFQLINVEDFQGVGESEPNPYFYQNLGEAEYVVALFMYMCLLGYPADKISILTTYNGQKHLIRDIINRRCGNNPLIGRPNKVTTVDRFQGQQNDYILLSLVRTRAVGHLRDVRRLVVAMSRARLGLYIFARVSLFQNCFELTPAFSQLTARPLHLHIIPTEPFPTSRKNGERPPHEVQVIKNMPQMANFVYNMYMHLIQTTHHYHQTFLQLPPAMVEEGEEGQSQETEMEAEEETVSAQGNLTPSPADASLSQETPAAQPDCSSQTEDTSAPCDIATAAEPVSAAAEAATPQDAESVPTETE.

Positions 1–416 are helical region with structural similarity to ARM repeat domains; sequence MAAPAQPKKI…LVSRHERRIS (416 aa). The segment at 417–1481 is required for assembly of the IB complex; sequence QIQQLNQMPL…DAESVPTETE (1065 aa). Residues 754–773 form a disordered region; that stretch reads RSGKGKKRKDADGEEDDTEE. Residues Gln-801, Gln-806, and 826–831 contribute to the ATP site; that span reads GTGKTD. At Lys-1055 the chain carries N6-acetyllysine. Acidic residues predominate over residues 1396 to 1414; sequence EEGEEGQSQETEMEAEEET. The disordered stretch occupies residues 1396 to 1481; that stretch reads EEGEEGQSQE…DAESVPTETE (86 aa). The segment covering 1418–1448 has biased composition (polar residues); that stretch reads QGNLTPSPADASLSQETPAAQPDCSSQTEDT. The segment covering 1455–1468 has biased composition (low complexity); that stretch reads ATAAEPVSAAAEAA.

The protein belongs to the CWF11 family. As to quaternary structure, identified in the spliceosome C complex. Component of the XAB2 complex, a multimeric protein complex composed of XAB2, PRPF19, AQR, ZNF830, ISY1, and PPIE. Identified in a pentameric intron-binding (IB) complex composed of AQR, XAB2, ISY1, ZNF830 and PPIE that is incorporated into the spliceosome as a preassembled complex. The IB complex does not contain PRPF19. Within the spliceosome, interacts with SNRPA1, SF3B1, SF3B3, SF3A1 and SF3A2.

The protein resides in the nucleus. The protein localises to the nucleoplasm. The catalysed reaction is ATP + H2O = ADP + phosphate + H(+). Functionally, involved in pre-mRNA splicing as component of the spliceosome. Intron-binding spliceosomal protein required to link pre-mRNA splicing and snoRNP (small nucleolar ribonucleoprotein) biogenesis. Plays a key role in position-dependent assembly of intron-encoded box C/D small snoRNP, splicing being required for snoRNP assembly. May act by helping the folding of the snoRNA sequence. Binds to intron of pre-mRNAs in a sequence-independent manner, contacting the region between snoRNA and the branchpoint of introns (40 nucleotides upstream of the branchpoint) during the late stages of splicing. Has ATP-dependent RNA helicase activity and can unwind double-stranded RNA molecules with a 3' overhang (in vitro). The protein is RNA helicase aquarius (Aqr) of Mus musculus (Mouse).